A 368-amino-acid polypeptide reads, in one-letter code: Glycolate oxidase 2 (368 aa).

One can recognise an FMN hydroxy acid dehydrogenase domain in the interval 1–360; it reads MALVTNVCEY…TRGHVVTESD (360 aa). FMN contacts are provided by residues 78-80, Ser-107, 128-130, and Thr-156; these read PTA and QLS. Arg-165 is a binding site for glyoxylate. FMN contacts are provided by Lys-231 and Ser-253. Glyoxylate contacts are provided by His-255 and Arg-258. Residue His-255 is the Proton acceptor of the active site. Residues 286-290 and 309-310 contribute to the FMN site; these read DSGFR and GR. The Microbody targeting signal signature appears at 366–368; the sequence is SRL.

Belongs to the FMN-dependent alpha-hydroxy acid dehydrogenase family. In terms of assembly, homotetramer. It depends on FMN as a cofactor.

Its subcellular location is the peroxisome. It catalyses the reaction glycolate + O2 = glyoxylate + H2O2. Its pathway is photosynthesis; photorespiration; glycine from 2-phosphoglycolate: step 2/3. Functionally, catalyzes the oxidation of glycolate to glyoxylate, with a reduction of O2 to H2O2. Is a key enzyme in photorespiration in green plants. This is Glycolate oxidase 2 (GLO2) from Oryza sativa subsp. indica (Rice).